The following is a 448-amino-acid chain: Bifunctional protein GlmU (448 aa).

Residues 1 to 232 (MSDRSLLVVV…ADEVAGVNSR (232 aa)) are pyrophosphorylase. UDP-N-acetyl-alpha-D-glucosamine-binding positions include 11 to 14 (LAAG), Lys25, Gln78, and 83 to 84 (GT). Asp108 provides a ligand contact to Mg(2+). UDP-N-acetyl-alpha-D-glucosamine-binding residues include Gly144, Glu158, Asn173, and Asn230. Residue Asn230 coordinates Mg(2+). A linker region spans residues 233–253 (VQLAEAEAILQRRLRLAAMAG). The N-acetyltransferase stretch occupies residues 254–448 (GATLVAPETV…FRAARSKPKG (195 aa)). Positions 319 and 337 each coordinate UDP-N-acetyl-alpha-D-glucosamine. His349 (proton acceptor) is an active-site residue. Residues Tyr352 and Asn363 each coordinate UDP-N-acetyl-alpha-D-glucosamine. Residues Ala366, 372-373 (NY), Thr409, and Arg426 each bind acetyl-CoA.

It in the N-terminal section; belongs to the N-acetylglucosamine-1-phosphate uridyltransferase family. In the C-terminal section; belongs to the transferase hexapeptide repeat family. Homotrimer. Requires Mg(2+) as cofactor.

Its subcellular location is the cytoplasm. It carries out the reaction alpha-D-glucosamine 1-phosphate + acetyl-CoA = N-acetyl-alpha-D-glucosamine 1-phosphate + CoA + H(+). The enzyme catalyses N-acetyl-alpha-D-glucosamine 1-phosphate + UTP + H(+) = UDP-N-acetyl-alpha-D-glucosamine + diphosphate. It participates in nucleotide-sugar biosynthesis; UDP-N-acetyl-alpha-D-glucosamine biosynthesis; N-acetyl-alpha-D-glucosamine 1-phosphate from alpha-D-glucosamine 6-phosphate (route II): step 2/2. It functions in the pathway nucleotide-sugar biosynthesis; UDP-N-acetyl-alpha-D-glucosamine biosynthesis; UDP-N-acetyl-alpha-D-glucosamine from N-acetyl-alpha-D-glucosamine 1-phosphate: step 1/1. Its pathway is bacterial outer membrane biogenesis; LPS lipid A biosynthesis. In terms of biological role, catalyzes the last two sequential reactions in the de novo biosynthetic pathway for UDP-N-acetylglucosamine (UDP-GlcNAc). The C-terminal domain catalyzes the transfer of acetyl group from acetyl coenzyme A to glucosamine-1-phosphate (GlcN-1-P) to produce N-acetylglucosamine-1-phosphate (GlcNAc-1-P), which is converted into UDP-GlcNAc by the transfer of uridine 5-monophosphate (from uridine 5-triphosphate), a reaction catalyzed by the N-terminal domain. The chain is Bifunctional protein GlmU from Xanthobacter autotrophicus (strain ATCC BAA-1158 / Py2).